The following is a 173-amino-acid chain: Catabolic 3-dehydroquinase (173 aa).

Catalysis depends on Tyr26, which acts as the Proton acceptor. Substrate contacts are provided by Asn102, His108, and Asp115. The Proton donor role is filled by His128. Residues Val129 to Ser130 and Arg139 contribute to the substrate site.

Belongs to the type-II 3-dehydroquinase family. As to quaternary structure, homododecamer. Adopts a ring-like structure, composed of an arrangement of two hexameric rings stacked on top of one another.

It catalyses the reaction 3-dehydroquinate = 3-dehydroshikimate + H2O. It functions in the pathway aromatic compound metabolism; 3,4-dihydroxybenzoate biosynthesis; 3,4-dihydroxybenzoate from 3-dehydroquinate: step 1/2. In terms of biological role, 3-dehydroquinate dehydratase; part of the qa gene cluster that mediates the catabolism of quinic acid (QA) and as such, allows the use of QA as a sole carbon source. Catalyzes the second reaction in the inducible quinic acid catabolic pathway by converting 3-dehydroquinate into 3-dehydroshikimate. The qa cluster encodes 3 inducible enymes (qa-2, qa-3 and qa-4) catalyzing the first three reactions in the catabolism of quinic acid to protocatechuic acid (also known as 3,4-Dihydroxybenzoic acid). This chain is Catabolic 3-dehydroquinase, found in Neurospora crassa (strain ATCC 24698 / 74-OR23-1A / CBS 708.71 / DSM 1257 / FGSC 987).